Consider the following 272-residue polypeptide: Arylesterase (272 aa).

The AB hydrolase-1 domain maps to 21–253 (KPVLFSHGWL…LKVYKDAPHG (233 aa)). Residue Trp-29 participates in acetate binding. Ser-95 is an active-site residue. Met-96 is an acetate binding site. Catalysis depends on residues Asp-223 and His-252.

It belongs to the AB hydrolase superfamily. Bacterial non-heme haloperoxidase / perhydrolase family. Dimer of trimers.

It catalyses the reaction a phenyl acetate + H2O = a phenol + acetate + H(+). The enzyme catalyses peracetic acid + H2O = acetate + H2O2 + H(+). The catalysed reaction is a percarboxylic acid + H2O = a carboxylate + H2O2 + H(+). In terms of biological role, hydrolyzes phenolic esters, such as phenyl acetate, nitrophenyl acetate and naphtyl acetate. Can act on a wide range of esters, but reaction rate and enantioselectivity differ significantly depending on the substrate. Shows a preference for esters with small acyl groups. Also shows low perhydrolase activity, and catalyzes the reversible formation of peroxycarboxylic acids from carboxylic acids and hydrogen peroxide. In vitro, enzyme-generated peracetic acid oxidizes bromide ion to bromonium, which reacts with monochlorodimedone to form bromochlorodimedone. The chain is Arylesterase from Pseudomonas fluorescens.